The sequence spans 5125 residues: Usherin (5125 aa).

The first 33 residues, 1 to 33 (MYYLALSSGFLGQAIKTSILAYLASVLLAASQG), serve as a signal peptide directing secretion. N-linked (GlcNAc...) asparagine glycans are attached at residues asparagine 120, asparagine 229, asparagine 257, asparagine 273, asparagine 414, asparagine 447, and asparagine 468. A Laminin N-terminal domain is found at 273-513 (NVSLTNREIL…AVDEITIIGR (241 aa)). 39 disulfide bridges follow: cysteine 514-cysteine 523, cysteine 516-cysteine 532, cysteine 534-cysteine 545, cysteine 548-cysteine 568, cysteine 571-cysteine 580, cysteine 573-cysteine 601, cysteine 604-cysteine 613, cysteine 616-cysteine 634, cysteine 637-cysteine 651, cysteine 639-cysteine 658, cysteine 660-cysteine 669, cysteine 672-cysteine 687, cysteine 690-cysteine 704, cysteine 692-cysteine 711, cysteine 713-cysteine 722, cysteine 725-cysteine 740, cysteine 743-cysteine 755, cysteine 745-cysteine 762, cysteine 764-cysteine 773, cysteine 776-cysteine 788, cysteine 791-cysteine 804, cysteine 793-cysteine 811, cysteine 813-cysteine 822, cysteine 825-cysteine 840, cysteine 843-cysteine 857, cysteine 845-cysteine 864, cysteine 866-cysteine 875, cysteine 878-cysteine 893, cysteine 896-cysteine 909, cysteine 898-cysteine 916, cysteine 918-cysteine 927, cysteine 930-cysteine 944, cysteine 947-cysteine 959, cysteine 949-cysteine 966, cysteine 981-cysteine 995, cysteine 998-cysteine 1010, cysteine 1000-cysteine 1017, cysteine 1019-cysteine 1028, and cysteine 1031-cysteine 1046. Laminin EGF-like domains lie at 514-570 (CQCH…NCKP), 571-636 (CQCH…VCKH), 637-689 (CDCN…CCRP), 690-742 (CDCN…GCEP), 743-790 (CHCN…ACEV), 791-842 (CDCN…LCLP), 843-895 (CNCE…GCQA), 896-946 (CDCD…GCLP), 947-997 (CLCH…RCRP), and 998-1048 (CHCH…ACSK). The N-linked (GlcNAc...) asparagine glycan is linked to asparagine 646. Residues asparagine 835 and asparagine 852 are each glycosylated (N-linked (GlcNAc...) asparagine). Residue asparagine 884 is glycosylated (N-linked (GlcNAc...) asparagine). An N-linked (GlcNAc...) asparagine glycan is attached at asparagine 940. Residue asparagine 1007 is glycosylated (N-linked (GlcNAc...) asparagine). Fibronectin type-III domains follow at residues 1054 to 1142 (PPPR…TKPE), 1146 to 1240 (GHLN…APPQ), 1241 to 1356 (RQEP…SAPV), and 1357 to 1461 (FMAA…AAPA). N-linked (GlcNAc...) asparagine glycans are attached at residues asparagine 1067, asparagine 1149, asparagine 1170, asparagine 1221, asparagine 1304, and asparagine 1381. 2 consecutive Laminin G-like domains span residues 1510-1697 (TKGT…WEGC) and 1702-1879 (EEGV…QDGC). Cystine bridges form between cysteine 1660–cysteine 1697 and cysteine 1850–cysteine 1879. Fibronectin type-III domains are found at residues 1857 to 1943 (TRGA…SAPH), 1945 to 2042 (VPTP…TPQE), 2043 to 2132 (APQE…LPPE), 2133 to 2230 (RVDP…TVPE), 2231 to 2318 (GVPA…APPE), 2319 to 2421 (GTVN…MPPG), 2425 to 2519 (GLLS…TTED), 2520 to 2613 (KPGP…TPEG), 2614 to 2709 (IPGP…TRPS), 2713 to 2806 (GVQP…THPA), 2807 to 2910 (LPQE…TLAG), 2914 to 3005 (RGAT…TWEE), 3009 to 3099 (GMRP…TPSG), 3380 to 3485 (ATEE…TRED), 3486 to 3577 (VPQG…TRGV), 3580 to 3670 (SVPP…AAPQ), 3672 to 3762 (VWVT…TPED), 3765 to 3852 (PPCN…TLEA), 3853 to 3950 (APVG…TLEA), 3951 to 4054 (PPQD…SAPS), 4055 to 4143 (GLMN…APPD), 4144 to 4251 (SQMA…APPD), 4252 to 4344 (GLSP…ASPA), 4345 to 4432 (GVSP…APPE), 4433 to 4517 (DMDP…TSPS), 4518 to 4620 (APSG…IPPL), 4625 to 4720 (PHLE…TGPA), 4721 to 4813 (PPEG…THPA), and 4814 to 4916 (PPSG…TKKE). The segment at 1930 to 1950 (SDWSRGRTLGSAPHSVPTPSR) is disordered.

As to quaternary structure, interacts with collagen IV and fibronectin via its laminin EGF-like domains. Interaction with collagen may be required for stable integration into the basement membrane. Interacts with NINL. Interacts with USH1C. Interacts (via the cytoplasmic region) with PDZD7. Component of USH2 complex, composed of ADGRV1, PDZD7, USH2A and WHRN. Interacts with ADGRV1/MASS1 (via N-terminal PDZ domain). Interacts (via the cytoplasmic region) with WHRN. Interacts (via the cytoplasmic region) with VEZT and MYO7A (via MyTH4-FERM domains); the interaction associates VEZT with the USH2 complex at the stereocilia base. As to expression, present in the synaptic terminals of inner ear hair cells (at protein level). Predominantly expressed in the retina and cochlea. Weakly expressed in brain and kidney. Detectable from E17 in the neural epithelium, but not in the retinal pigment epithelium (RPE) of the developing retina. After birth, it is expressed at P7 and remains expressed during adulthood.

The protein localises to the secreted. It localises to the cell projection. The protein resides in the stereocilium membrane. It is found in the photoreceptor inner segment. In terms of biological role, involved in hearing and vision as member of the USH2 complex. In the inner ear, required for the hair bundle ankle formation, which connects growing stereocilia in developing cochlear hair cells. In retina photoreceptors, the USH2 complex is required for the maintenance of periciliary membrane complex that seems to play a role in regulating intracellular protein transport. In Rattus norvegicus (Rat), this protein is Usherin (Ush2a).